We begin with the raw amino-acid sequence, 203 residues long: Small ribosomal subunit protein uS4 (203 aa).

The region spanning 93-153 (RRLDNVVYRL…EKSKNLQQVK (61 aa)) is the S4 RNA-binding domain.

Belongs to the universal ribosomal protein uS4 family. In terms of assembly, part of the 30S ribosomal subunit. Contacts protein S5. The interaction surface between S4 and S5 is involved in control of translational fidelity.

Functionally, one of the primary rRNA binding proteins, it binds directly to 16S rRNA where it nucleates assembly of the body of the 30S subunit. With S5 and S12 plays an important role in translational accuracy. This Lactobacillus delbrueckii subsp. bulgaricus (strain ATCC 11842 / DSM 20081 / BCRC 10696 / JCM 1002 / NBRC 13953 / NCIMB 11778 / NCTC 12712 / WDCM 00102 / Lb 14) protein is Small ribosomal subunit protein uS4.